The following is a 535-amino-acid chain: MAKKFPLFHPFSRRLHIVLLCMIGFFCTTFMRIHFALTMTCMVNSTALAVENEIKLAGNSNVSEISIIEEINLGSNGQCGLMDEDGQKKVVVDYGGELVWNSYEQNLIFSGTFWGSLITVLPSMFFIERFSPRHVLQISVALYILVTVITPFLATHFGYFSVFLARIGMGLGEGFVFPTNNAIIGNWFPSSEKSTALSIFTLGNQIASAAGSPMVAAVCASDLGWPATFYFAGIFATGWSILWFFTASSHPAKVKMMTKKEKEYLLANVVKKVHKSEKTRSIPYSKILTSPAFLGQLQCHFFVNLFMTLFQIYLPSYFKEVLHLGVIANGTFTAIPNIFNMIFKVVWGIGIDKLKENKILSNTKAVKVSHGVASFGSSFSLILLAFFVDCSNPTTGLIFFCLMYSSMGTFVSGFYTSLLSLAPQYTATMSAISMFVAMIGRLTTPAVMSMFRKDGTAAEWQNIFIGCSLAHIFSGSIFLLFGSGELQDWAKVEDDQEMNEKEKLKTIENGIVVVEEVDVKNEMSATLVKEDSLCL.

The helical transmembrane segment at 17–37 (IVLLCMIGFFCTTFMRIHFAL) threads the bilayer. N-linked (GlcNAc...) asparagine glycosylation is found at N44 and N61. The next 6 membrane-spanning stretches (helical) occupy residues 107 to 127 (LIFS…MFFI), 144 to 164 (ILVT…SVFL), 167 to 187 (IGMG…IGNW), 199 to 219 (IFTL…AAVC), 225 to 245 (WPAT…LWFF), and 292 to 312 (AFLG…LFQI). A glycan (N-linked (GlcNAc...) asparagine) is linked at N329. 5 helical membrane-spanning segments follow: residues 331 to 351 (TFTA…GIGI), 368 to 388 (VSHG…AFFV), 395 to 415 (TGLI…SGFY), 429 to 451 (MSAI…MSMF), and 463 to 483 (IFIG…LFGS).

The protein belongs to the major facilitator superfamily. Sodium/anion cotransporter family.

It localises to the membrane. This is an uncharacterized protein from Caenorhabditis elegans.